Here is a 371-residue protein sequence, read N- to C-terminus: tRNA-specific 2-thiouridylase MnmA (371 aa).

Residues 13 to 20 (GMSGGVDS) and methionine 39 each bind ATP. The interaction with target base in tRNA stretch occupies residues 99–101 (NPD). The active-site Nucleophile is the cysteine 104. A disulfide bond links cysteine 104 and cysteine 200. Residue glycine 128 participates in ATP binding. The segment at 150–152 (KDQ) is interaction with tRNA. The active-site Cysteine persulfide intermediate is the cysteine 200. The interaction with tRNA stretch occupies residues 308 to 309 (RY).

The protein belongs to the MnmA/TRMU family.

Its subcellular location is the cytoplasm. The catalysed reaction is S-sulfanyl-L-cysteinyl-[protein] + uridine(34) in tRNA + AH2 + ATP = 2-thiouridine(34) in tRNA + L-cysteinyl-[protein] + A + AMP + diphosphate + H(+). Functionally, catalyzes the 2-thiolation of uridine at the wobble position (U34) of tRNA, leading to the formation of s(2)U34. The polypeptide is tRNA-specific 2-thiouridylase MnmA (Listeria monocytogenes serotype 4a (strain HCC23)).